The primary structure comprises 523 residues: GMP synthase [glutamine-hydrolyzing] (523 aa).

The 198-residue stretch at 8–205 (KILILDFGSQ…VVNICGCETK (198 aa)) folds into the Glutamine amidotransferase type-1 domain. The active-site Nucleophile is the Cys85. Residues His179 and Glu181 contribute to the active site. Residues 206–398 (WTAENIIEDA…LGLPAEMINR (193 aa)) form the GMPS ATP-PPase domain. Residue 233 to 239 (SGGVDSS) coordinates ATP.

As to quaternary structure, homodimer.

The catalysed reaction is XMP + L-glutamine + ATP + H2O = GMP + L-glutamate + AMP + diphosphate + 2 H(+). It participates in purine metabolism; GMP biosynthesis; GMP from XMP (L-Gln route): step 1/1. Catalyzes the synthesis of GMP from XMP. This chain is GMP synthase [glutamine-hydrolyzing], found in Haemophilus influenzae (strain PittGG).